We begin with the raw amino-acid sequence, 277 residues long: PTS system sorbose-specific EIIC component (277 aa).

5 consecutive transmembrane segments (helical) span residues 1–21 (MAIS…VGMG), 92–112 (IQKG…LTVL), 133–153 (FTAI…RVSI), 177–197 (VITG…YAMI), and 219–239 (YLKL…IVYV). Residues 3-237 (ISTIQIILIF…GAVGLIFAIV (235 aa)) enclose the PTS EIIC type-4 domain.

The protein resides in the cell membrane. Functionally, the phosphoenolpyruvate-dependent sugar phosphotransferase system (PTS), a major carbohydrate active transport system, catalyzes the phosphorylation of incoming sugar substrates concomitant with their translocation across the cell membrane. The enzyme II SorABCD PTS system is involved in L-sorbose transport. In Lacticaseibacillus casei (Lactobacillus casei), this protein is PTS system sorbose-specific EIIC component.